The chain runs to 420 residues: Gamma-glutamyl phosphate reductase (420 aa).

This sequence belongs to the gamma-glutamyl phosphate reductase family.

It is found in the cytoplasm. It carries out the reaction L-glutamate 5-semialdehyde + phosphate + NADP(+) = L-glutamyl 5-phosphate + NADPH + H(+). It functions in the pathway amino-acid biosynthesis; L-proline biosynthesis; L-glutamate 5-semialdehyde from L-glutamate: step 2/2. Catalyzes the NADPH-dependent reduction of L-glutamate 5-phosphate into L-glutamate 5-semialdehyde and phosphate. The product spontaneously undergoes cyclization to form 1-pyrroline-5-carboxylate. The polypeptide is Gamma-glutamyl phosphate reductase (Streptococcus pneumoniae (strain JJA)).